A 342-amino-acid polypeptide reads, in one-letter code: L-threonine 3-dehydrogenase (342 aa).

Cysteine 38 serves as a coordination point for Zn(2+). Residues threonine 40 and histidine 43 each act as charge relay system in the active site. Residues histidine 63 and glutamate 64 each coordinate Zn(2+). NAD(+) is bound by residues isoleucine 175, aspartate 195, arginine 200, 263–265 (LGI), and 287–288 (VY).

Belongs to the zinc-containing alcohol dehydrogenase family. In terms of assembly, homotetramer. The cofactor is Zn(2+).

It localises to the cytoplasm. The enzyme catalyses L-threonine + NAD(+) = (2S)-2-amino-3-oxobutanoate + NADH + H(+). It functions in the pathway amino-acid degradation; L-threonine degradation via oxydo-reductase pathway; glycine from L-threonine: step 1/2. Its function is as follows. Catalyzes the NAD(+)-dependent oxidation of L-threonine to 2-amino-3-ketobutyrate. This Ruegeria pomeroyi (strain ATCC 700808 / DSM 15171 / DSS-3) (Silicibacter pomeroyi) protein is L-threonine 3-dehydrogenase.